We begin with the raw amino-acid sequence, 227 residues long: Cleavage and polyadenylation specificity factor subunit 5 (227 aa).

Positions 76 to 201 constitute a Nudix hydrolase domain; the sequence is MRRTVEGVLI…KLVAAPLFEL (126 aa). The interval 102–104 is interaction with RNA; the sequence is TFF. The short motif at 109–130 is the Nudix box element; it reads GELNPGEDEVEGLKRLMTEILG.

The protein belongs to the Nudix hydrolase family. CPSF5 subfamily. Homodimer (via N- and C-terminus); binds RNA as homodimer. Component of the cleavage factor Im (CFIm) complex.

The protein localises to the nucleus. It localises to the cytoplasm. Its function is as follows. Component of the cleavage factor Im (CFIm) complex that functions as an activator of the pre-mRNA 3'-end cleavage and polyadenylation processing required for the maturation of pre-mRNA into functional mRNAs. CFIm contributes to the recruitment of multiprotein complexes on specific sequences on the pre-mRNA 3'-end, so called cleavage and polyadenylation signals (pA signals). Most pre-mRNAs contain multiple pA signals, resulting in alternative cleavage and polyadenylation (APA) producing mRNAs with variable 3'-end formation. The CFIm complex acts as a key regulator of cleavage and polyadenylation site choice during APA through its binding to 5'-UGUA-3' elements localized in the 3'-untranslated region (UTR) for a huge number of pre-mRNAs. Binds to 5'-UGUA-3' elements localized upstream of pA signals that act as enhancers of pre-mRNA 3'-end processing. The homodimer mediates simultaneous sequence-specific recognition of two 5'-UGUA-3' elements within the pre-mRNA. Plays a role in somatic cell fate transitions and pluripotency by regulating widespread changes in gene expression through an APA-dependent function. Binds to chromatin. Binds to, but does not hydrolyze mono- and di-adenosine nucleotides. The polypeptide is Cleavage and polyadenylation specificity factor subunit 5 (Xenopus laevis (African clawed frog)).